The primary structure comprises 175 residues: CASP-like protein 2C1 (175 aa).

The Cytoplasmic segment spans residues 1-7 (MVKLRET). The helical transmembrane segment at 8–28 (EVILRLCIVFFLLLTSCLIGL) threads the bilayer. The Extracellular portion of the chain corresponds to 29–45 (DSQTKEIAYIHKNVSFR). N-linked (GlcNAc...) asparagine glycosylation is present at asparagine 41. A helical membrane pass occupies residues 46 to 66 (YLLALEAELYIDVVVAAYNLV). At 67-91 (QLGLGWYNVEQKTSNPKWFSYLLDQ) the chain is on the cytoplasmic side. The helical transmembrane segment at 92-112 (TAAYVVFAGTSAAAQHSLLVV) threads the bilayer. Residues 113 to 136 (TGSRELQWMKWCYKFTRFCFQMGS) lie on the Extracellular side of the membrane. Residues 137 to 157 (AIILNYIAAALMVLLSSISAF) traverse the membrane as a helical segment. Residues 158 to 175 (NLFRLYSPKRFFRFKSSS) are Cytoplasmic-facing.

This sequence belongs to the Casparian strip membrane proteins (CASP) family. Homodimer and heterodimers.

The protein resides in the cell membrane. In Arabidopsis thaliana (Mouse-ear cress), this protein is CASP-like protein 2C1.